Here is a 262-residue protein sequence, read N- to C-terminus: Methylthioribulose-1-phosphate dehydratase (262 aa).

Residue Cys115 participates in substrate binding. Positions 133 and 135 each coordinate Zn(2+). Glu158 serves as the catalytic Proton donor/acceptor. His223 serves as a coordination point for Zn(2+).

The protein belongs to the aldolase class II family. MtnB subfamily. Zn(2+) is required as a cofactor.

It localises to the cytoplasm. The catalysed reaction is 5-(methylsulfanyl)-D-ribulose 1-phosphate = 5-methylsulfanyl-2,3-dioxopentyl phosphate + H2O. Its pathway is amino-acid biosynthesis; L-methionine biosynthesis via salvage pathway; L-methionine from S-methyl-5-thio-alpha-D-ribose 1-phosphate: step 2/6. Its function is as follows. Catalyzes the dehydration of methylthioribulose-1-phosphate (MTRu-1-P) into 2,3-diketo-5-methylthiopentyl-1-phosphate (DK-MTP-1-P). The protein is Methylthioribulose-1-phosphate dehydratase of Meyerozyma guilliermondii (strain ATCC 6260 / CBS 566 / DSM 6381 / JCM 1539 / NBRC 10279 / NRRL Y-324) (Yeast).